A 420-amino-acid chain; its full sequence is Putative FBD-associated F-box protein At1g78730 (420 aa).

In terms of domain architecture, F-box spans 21 to 71 (LDWLRKLPDSLLCQVFLNLPTKDVVKTSVLSSTWGNIWRSVPGLDLGYGDF). Residues 341-390 (ISILPGPQCNLPALEFVDILKPMVEKETELKLMSYFLEKSTILKKLTLRL) enclose the FBD domain.

The chain is Putative FBD-associated F-box protein At1g78730 from Arabidopsis thaliana (Mouse-ear cress).